A 677-amino-acid polypeptide reads, in one-letter code: Methionine--tRNA ligase (677 aa).

A 'HIGH' region motif is present at residues 15–25 (PYANGSIHLGH). Positions 146, 149, 159, and 162 each coordinate Zn(2+). The 'KMSKS' region signature appears at 333–337 (KMSKS). Lysine 336 serves as a coordination point for ATP. The 103-residue stretch at 575-677 (DFAKVDLRVA…AGAKPGHQVK (103 aa)) folds into the tRNA-binding domain.

It belongs to the class-I aminoacyl-tRNA synthetase family. MetG type 1 subfamily. In terms of assembly, homodimer. Zn(2+) is required as a cofactor.

Its subcellular location is the cytoplasm. It catalyses the reaction tRNA(Met) + L-methionine + ATP = L-methionyl-tRNA(Met) + AMP + diphosphate. In terms of biological role, is required not only for elongation of protein synthesis but also for the initiation of all mRNA translation through initiator tRNA(fMet) aminoacylation. This Escherichia coli (strain UTI89 / UPEC) protein is Methionine--tRNA ligase.